We begin with the raw amino-acid sequence, 516 residues long: Zinc finger protein 83 (516 aa).

Residues 1 to 20 form a disordered region; it reads MHGRKDDAQKQPVKNQLGLN. Residues 93-115 form a C2H2-type 1; degenerate zinc finger; it reads YKCSERGKAFHQGLHFTIHQIIH. 14 C2H2-type zinc fingers span residues 121–143, 149–171, 177–199, 205–227, 233–255, 261–283, 289–311, 317–339, 345–367, 373–395, 401–423, 429–451, 457–479, and 485–507; these read FKCDICGKIFNKKSNLASHQRIH, YKCNECGKVFHNMSHLAQHRRIH, YKCNECGKVFNQISHLAQHQRIH, YKCNECGKVFHQISHLAQHRTIH, YECNKCGKVFSRNSYLVQHLIIH, YRCNVCGKVFHHISHLAQHQRIH, YKCNECGKVFSHKSSLVNHWRIH, YKCNECGKVFSRNSYLAQHLIIH, YKCDECDKAFSQNSHLVQHHRIH, YKCDECGKVFSQNSYLAYHWRIH, YKCNECGKVFGLNSSLAHHRKIH, FKCNECGKAFSMRSSLTNHHAIH, and FKCNECGKLFRDNSYLVRHQRFH.

The protein belongs to the krueppel C2H2-type zinc-finger protein family.

It is found in the nucleus. Functionally, may be involved in transcriptional regulation. This is Zinc finger protein 83 (ZNF83) from Homo sapiens (Human).